The chain runs to 249 residues: Triosephosphate isomerase (249 aa).

A substrate-binding site is contributed by 9–11 (NWK). Catalysis depends on H95, which acts as the Electrophile. The active-site Proton acceptor is E165. Substrate-binding positions include G171, S211, and 232–233 (GG).

Belongs to the triosephosphate isomerase family. In terms of assembly, homodimer.

The protein resides in the cytoplasm. It catalyses the reaction D-glyceraldehyde 3-phosphate = dihydroxyacetone phosphate. It participates in carbohydrate biosynthesis; gluconeogenesis. Its pathway is carbohydrate degradation; glycolysis; D-glyceraldehyde 3-phosphate from glycerone phosphate: step 1/1. Functionally, involved in the gluconeogenesis. Catalyzes stereospecifically the conversion of dihydroxyacetone phosphate (DHAP) to D-glyceraldehyde-3-phosphate (G3P). This Chlorobium phaeobacteroides (strain DSM 266 / SMG 266 / 2430) protein is Triosephosphate isomerase.